Consider the following 242-residue polypeptide: Host range factor p28 (242 aa).

A KilA-N domain is found at 21 to 131 (YIDEPNDIRL…QSILRGLVNW (111 aa)). An RING-type zinc finger spans residues 173–226 (CGICYEVVYSKRLENDRYFGLLDSCNHIFCITCINIWHRTRRETGALDNCPICR).

The protein belongs to the orthopoxvirus OPG021 family.

Its subcellular location is the host cytoplasm. The enzyme catalyses S-ubiquitinyl-[E2 ubiquitin-conjugating enzyme]-L-cysteine + [acceptor protein]-L-lysine = [E2 ubiquitin-conjugating enzyme]-L-cysteine + N(6)-ubiquitinyl-[acceptor protein]-L-lysine.. In terms of biological role, RING-finger E3 ubiquitin ligase which catalyzes the formation of both 'Lys-48'- and 'Lys-63'-linked polyubiquitin chains. Plays an important role in virulence by acting as an anti-apoptotic factor. The chain is Host range factor p28 (OPG021) from Cynomys gunnisoni (Gunnison's prairie dog).